We begin with the raw amino-acid sequence, 442 residues long: CBL-interacting serine/threonine-protein kinase 14 (442 aa).

Residues 22 to 276 enclose the Protein kinase domain; it reads YEVGKLVGCG…IEEIIHDPWF (255 aa). ATP is bound by residues 28–36 and Lys-51; that span reads VGCGAFAKV. Asp-144 serves as the catalytic Proton acceptor. An activation loop region spans residues 162 to 191; it reads DFGLSALTDQIRPDGLLHTLCGTPAYVAPE. Position 166 is a phosphoserine (Ser-166). Thr-180 carries the phosphothreonine modification. Residues 305–329 form the NAF domain; it reads MGARRMNAFDIISGSPGFNLSGLFG. Positions 335-365 are PPI; it reads DRVERFVSAWTAERVVERLEEIVSAENLTVA.

It belongs to the protein kinase superfamily. CAMK Ser/Thr protein kinase family. SNF1 subfamily. In terms of assembly, interacts with CBL2. Interacts with CBL3. Interacts with CBL8. Interacts with CBL9. Interacts with KIN10 and KIN11. Mn(2+) serves as cofactor. In terms of tissue distribution, predominant in roots, cauline leaves, and flowers. Ubiquitous with highest expression in 7-day-old seedlings and flower buds, followed by that in cauline leaves and young siliques.

It is found in the cytoplasm. It localises to the nucleus. The enzyme catalyses L-seryl-[protein] + ATP = O-phospho-L-seryl-[protein] + ADP + H(+). It catalyses the reaction L-threonyl-[protein] + ATP = O-phospho-L-threonyl-[protein] + ADP + H(+). CIPK serine-threonine protein kinases interact with CBL proteins. Binding of a CBL protein to the regulatory NAF domain of CIPK protein lead to the activation of the kinase in a calcium-dependent manner. The sequence is that of CBL-interacting serine/threonine-protein kinase 14 (CIPK14) from Arabidopsis thaliana (Mouse-ear cress).